Reading from the N-terminus, the 267-residue chain is Sulfate transporter CysZ (267 aa).

Transmembrane regions (helical) follow at residues 29 to 49, 73 to 93, 149 to 169, and 212 to 232; these read FVIM…WLFI, ILLI…FTTL, IILF…PIIV, and GLVM…PVAV.

Belongs to the CysZ family.

The protein resides in the cell inner membrane. Functionally, high affinity, high specificity proton-dependent sulfate transporter, which mediates sulfate uptake. Provides the sulfur source for the cysteine synthesis pathway. The chain is Sulfate transporter CysZ from Pasteurella multocida (strain Pm70).